The following is a 103-amino-acid chain: Large ribosomal subunit protein bL21 (103 aa).

It belongs to the bacterial ribosomal protein bL21 family. As to quaternary structure, part of the 50S ribosomal subunit. Contacts protein L20.

Its function is as follows. This protein binds to 23S rRNA in the presence of protein L20. The sequence is that of Large ribosomal subunit protein bL21 from Rhodococcus erythropolis (strain PR4 / NBRC 100887).